A 507-amino-acid chain; its full sequence is Tyrosine protein-kinase src-2 (507 aa).

Over residues 1–10 (MGSCIGKEDP) the composition is skewed to basic and acidic residues. Residues 1 to 52 (MGSCIGKEDPPPGATSPVHTSSTLGRESLPSHPRIPSIGPIAASSSGNTIDK) are disordered. Glycine 2 carries N-myristoyl glycine lipidation. The segment covering 35-47 (IPSIGPIAASSSG) has biased composition (low complexity). The SH3 domain maps to 57–118 (SQSANFVALF…PSNYVAREKS (62 aa)). The region spanning 124–216 (WYFGKMRRID…GLCVNLGAPC (93 aa)) is the SH2 domain. The region spanning 240-494 (VRLIRQIGAG…LQWKLEDLFN (255 aa)) is the Protein kinase domain. Residues 246-254 (IGAGQFGEV) and lysine 268 contribute to the ATP site. The Proton acceptor role is filled by aspartate 358. Position 500 is a phosphotyrosine (tyrosine 500).

It belongs to the protein kinase superfamily. Tyr protein kinase family. SRC subfamily. The cofactor is Mg(2+). Requires Mn(2+) as cofactor. Post-translationally, may be phosphorylated on Tyr-500 by csk-1. Expressed in vulva, cells around anus and pharyngeal muscles.

The enzyme catalyses L-tyrosyl-[protein] + ATP = O-phospho-L-tyrosyl-[protein] + ADP + H(+). With respect to regulation, may be inhibited by csk-1-mediated phosphorylation at Tyr-500. Non-receptor tyrosine-protein kinase which may play a role in larval and pharynx development. Unlike src-1, does not play a role in embryonic development. The chain is Tyrosine protein-kinase src-2 from Caenorhabditis elegans.